We begin with the raw amino-acid sequence, 258 residues long: Dehydrodolichyl diphosphate synthase complex subunit nus1 (258 aa).

A helical membrane pass occupies residues 5–21 (IFFYLALWVIQSVYGAW).

The protein belongs to the UPP synthase family. Forms an active dehydrodolichyl diphosphate synthase complex with SPAC4D7.04c. Mg(2+) serves as cofactor.

The protein resides in the endoplasmic reticulum membrane. The enzyme catalyses n isopentenyl diphosphate + (2E,6E)-farnesyl diphosphate = a di-trans,poly-cis-polyprenyl diphosphate + n diphosphate. It participates in protein modification; protein glycosylation. Its function is as follows. With SPAC4D7.04c, forms the dehydrodolichyl diphosphate synthase (DDS) complex, an essential component of the dolichol monophosphate (Dol-P) biosynthetic machinery. Adds multiple copies of isopentenyl pyrophosphate (IPP) to farnesyl pyrophosphate (FPP) to produce dehydrodolichyl diphosphate (Dedol-PP), a precursor of dolichol which is utilized as a sugar carrier in protein glycosylation in the endoplasmic reticulum (ER). The chain is Dehydrodolichyl diphosphate synthase complex subunit nus1 (nus1) from Schizosaccharomyces pombe (strain 972 / ATCC 24843) (Fission yeast).